Consider the following 333-residue polypeptide: Cytochrome f (333 aa).

Positions 1–44 are cleaved as a signal peptide; the sequence is MRNACTRARLTRTARAMVKTLFIAIASVTFFFTSDLALPQSAAA. Residues Y45, C66, C69, and H70 each coordinate heme. The chain crosses the membrane as a helical span at residues 299–318; sequence VGWLIAFVALVMLAQVMLVL.

This sequence belongs to the cytochrome f family. The 4 large subunits of the cytochrome b6-f complex are cytochrome b6, subunit IV (17 kDa polypeptide, PetD), cytochrome f and the Rieske protein, while the 4 small subunits are PetG, PetL, PetM and PetN. The complex functions as a dimer. It depends on heme as a cofactor.

The protein localises to the cellular thylakoid membrane. Its function is as follows. Component of the cytochrome b6-f complex, which mediates electron transfer between photosystem II (PSII) and photosystem I (PSI), cyclic electron flow around PSI, and state transitions. The chain is Cytochrome f from Nostoc sp. (strain PCC 7120 / SAG 25.82 / UTEX 2576).